The sequence spans 429 residues: Trehalose-phosphate phosphatase (429 aa).

Aspartate 181 serves as the catalytic Nucleophile. 3 residues coordinate Mg(2+): aspartate 181, aspartate 183, and aspartate 368. Aspartate 181–aspartate 183 contacts substrate.

It belongs to the trehalose phosphatase family. Mg(2+) is required as a cofactor.

It carries out the reaction alpha,alpha-trehalose 6-phosphate + H2O = alpha,alpha-trehalose + phosphate. It functions in the pathway glycan biosynthesis; trehalose biosynthesis. Removes the phosphate from trehalose 6-phosphate to produce free trehalose. The polypeptide is Trehalose-phosphate phosphatase (otsB) (Mycobacterium leprae (strain TN)).